Here is a 135-residue protein sequence, read N- to C-terminus: Peptidyl-prolyl cis-trans isomerase FPR2 (135 aa).

The signal sequence occupies residues 1 to 17; the sequence is MMFNIYLFVTFFSTILA. The PPIase FKBP-type domain occupies 43 to 132; sequence GDKVKVHYTG…VFDVELVDVK (90 aa).

The protein belongs to the FKBP-type PPIase family. FKBP2 subfamily.

It is found in the endoplasmic reticulum membrane. The catalysed reaction is [protein]-peptidylproline (omega=180) = [protein]-peptidylproline (omega=0). Its activity is regulated as follows. Inhibited by both FK506 and rapamycin. Binds FK506 with 15-fold lower affinity than FKB1. Functionally, PPIases accelerate the folding of proteins. It catalyzes the cis-trans isomerization of proline imidic peptide bonds in oligopeptides. FKBP-13 may play a role in protein trafficking in the ER. The protein is Peptidyl-prolyl cis-trans isomerase FPR2 (FPR2) of Saccharomyces cerevisiae (strain ATCC 204508 / S288c) (Baker's yeast).